The chain runs to 92 residues: MEKSRKILVGVLLFTASVAICLAQHWSYGLQPGGKRNAENLVESFQEIANEMESLGEGQKAECPGSYQHPRLSDLKETMASLIEGEARRKEI.

Residues 1-23 (MEKSRKILVGVLLFTASVAICLA) form the signal peptide. Glutamine 24 is subject to Pyrrolidone carboxylic acid. Glycine 33 carries the post-translational modification Glycine amide.

This sequence belongs to the GnRH family.

Its subcellular location is the secreted. Stimulates the secretion of gonadotropins. The chain is Progonadoliberin-1 (GNRH1) from Gallus gallus (Chicken).